The primary structure comprises 151 residues: 3-hydroxyacyl-[acyl-carrier-protein] dehydratase FabZ (151 aa).

The active site involves His-56.

This sequence belongs to the thioester dehydratase family. FabZ subfamily.

The protein localises to the cytoplasm. The enzyme catalyses a (3R)-hydroxyacyl-[ACP] = a (2E)-enoyl-[ACP] + H2O. In terms of biological role, involved in unsaturated fatty acids biosynthesis. Catalyzes the dehydration of short chain beta-hydroxyacyl-ACPs and long chain saturated and unsaturated beta-hydroxyacyl-ACPs. In Nitrobacter winogradskyi (strain ATCC 25391 / DSM 10237 / CIP 104748 / NCIMB 11846 / Nb-255), this protein is 3-hydroxyacyl-[acyl-carrier-protein] dehydratase FabZ.